We begin with the raw amino-acid sequence, 245 residues long: Ribosomal RNA large subunit methyltransferase E (245 aa).

The tract at residues 1-26 is disordered; that stretch reads MTKPPVGSNRSGRKLGQKVKKGKLKA. The segment covering 11 to 26 has biased composition (basic residues); that stretch reads SGRKLGQKVKKGKLKA. 5 residues coordinate S-adenosyl-L-methionine: G81, W83, D104, D120, and D144. K184 serves as the catalytic Proton acceptor.

This sequence belongs to the class I-like SAM-binding methyltransferase superfamily. RNA methyltransferase RlmE family.

It is found in the cytoplasm. The catalysed reaction is uridine(2552) in 23S rRNA + S-adenosyl-L-methionine = 2'-O-methyluridine(2552) in 23S rRNA + S-adenosyl-L-homocysteine + H(+). Specifically methylates the uridine in position 2552 of 23S rRNA at the 2'-O position of the ribose in the fully assembled 50S ribosomal subunit. The chain is Ribosomal RNA large subunit methyltransferase E from Sinorhizobium medicae (strain WSM419) (Ensifer medicae).